We begin with the raw amino-acid sequence, 91 residues long: Small ribosomal subunit protein uS19 (91 aa).

Belongs to the universal ribosomal protein uS19 family.

Its function is as follows. Protein S19 forms a complex with S13 that binds strongly to the 16S ribosomal RNA. The sequence is that of Small ribosomal subunit protein uS19 from Ralstonia nicotianae (strain ATCC BAA-1114 / GMI1000) (Ralstonia solanacearum).